A 309-amino-acid polypeptide reads, in one-letter code: Oxygen-dependent coproporphyrinogen-III oxidase (309 aa).

Serine 94 serves as a coordination point for substrate. Histidine 98 and histidine 108 together coordinate a divalent metal cation. Histidine 108 (proton donor) is an active-site residue. Residue 110 to 112 (NVR) participates in substrate binding. Residues histidine 147 and histidine 177 each coordinate a divalent metal cation. Residues 242-277 (YVEFNLVWDRGTLFGLQTGGRTESILMSLPPLVRWE) are important for dimerization. 260–262 (GGR) is a substrate binding site.

Belongs to the aerobic coproporphyrinogen-III oxidase family. Homodimer. The cofactor is a divalent metal cation.

The protein localises to the cytoplasm. It carries out the reaction coproporphyrinogen III + O2 + 2 H(+) = protoporphyrinogen IX + 2 CO2 + 2 H2O. Its pathway is porphyrin-containing compound metabolism; protoporphyrin-IX biosynthesis; protoporphyrinogen-IX from coproporphyrinogen-III (O2 route): step 1/1. Functionally, involved in the heme biosynthesis. Catalyzes the aerobic oxidative decarboxylation of propionate groups of rings A and B of coproporphyrinogen-III to yield the vinyl groups in protoporphyrinogen-IX. The chain is Oxygen-dependent coproporphyrinogen-III oxidase from Yersinia pseudotuberculosis serotype O:1b (strain IP 31758).